The primary structure comprises 192 residues: CASP-like protein 2U1 (192 aa).

Residues 1 to 11 lie on the Cytoplasmic side of the membrane; that stretch reads MASRKQGAREG. A helical transmembrane segment spans residues 12–32; the sequence is LWSMGVRLLTTLLCITSLILL. The Extracellular segment spans residues 33-58; sequence LKAKQTVRRALGLGYIAQTVKYSDTS. The helical transmembrane segment at 59–79 threads the bilayer; sequence GFIYLVYINILVAAYGLIVFV. The Cytoplasmic portion of the chain corresponds to 80–96; the sequence is SLIPSALGKSCSGKCSR. A helical transmembrane segment spans residues 97-117; the sequence is WTIFVLDQVFAYVLLSAVSAA. The Extracellular segment spans residues 118–145; it reads TEVLYLADKGMSKTQWEALCPTYGFFCH. Residues 146 to 166 traverse the membrane as a helical segment; that stretch reads MVSASVAIGSVAVVLLAVLSV. Over 167–192 the chain is Cytoplasmic; the sequence is SSAQSLFHNFYTRALYTTKMRHSSLT.

This sequence belongs to the Casparian strip membrane proteins (CASP) family. As to quaternary structure, homodimer and heterodimers.

Its subcellular location is the cell membrane. The protein is CASP-like protein 2U1 of Adiantum capillus-veneris (Maidenhair fern).